Here is a 320-residue protein sequence, read N- to C-terminus: uncharacterized protein (320 aa).

It belongs to the anthranilate phosphoribosyltransferase family.

This is an uncharacterized protein from Escherichia coli (strain K12).